A 100-amino-acid chain; its full sequence is Urease subunit gamma 1 (100 aa).

It belongs to the urease gamma subunit family. Heterotrimer of UreA (gamma), UreB (beta) and UreC (alpha) subunits. Three heterotrimers associate to form the active enzyme.

It is found in the cytoplasm. The catalysed reaction is urea + 2 H2O + H(+) = hydrogencarbonate + 2 NH4(+). The protein operates within nitrogen metabolism; urea degradation; CO(2) and NH(3) from urea (urease route): step 1/1. Its function is as follows. Disruption of the ure1 gene cluster suggests that it protects brucellae during their passage through the stomach. The major route of infection in human brucellosis is oral. This is Urease subunit gamma 1 from Brucella abortus (strain 2308).